The primary structure comprises 372 residues: Chaperone protein DnaJ (372 aa).

One can recognise a J domain in the interval 5–69; that stretch reads DYYEVLGVSK…DKRKQYDQFG (65 aa). A CR-type zinc finger spans residues 139–221; it reads GVDKIIELDL…CKGKGKYLER (83 aa). Cysteine 152, cysteine 155, cysteine 169, cysteine 172, cysteine 195, cysteine 198, cysteine 209, and cysteine 212 together coordinate Zn(2+). CXXCXGXG motif repeat units follow at residues 152–159, 169–176, 195–202, and 209–216; these read CSACFGSG, CNNCHGTG, CNVCNGAG, and CKNCKGKG.

This sequence belongs to the DnaJ family. In terms of assembly, homodimer. Zn(2+) is required as a cofactor.

The protein localises to the cytoplasm. Functionally, participates actively in the response to hyperosmotic and heat shock by preventing the aggregation of stress-denatured proteins and by disaggregating proteins, also in an autonomous, DnaK-independent fashion. Unfolded proteins bind initially to DnaJ; upon interaction with the DnaJ-bound protein, DnaK hydrolyzes its bound ATP, resulting in the formation of a stable complex. GrpE releases ADP from DnaK; ATP binding to DnaK triggers the release of the substrate protein, thus completing the reaction cycle. Several rounds of ATP-dependent interactions between DnaJ, DnaK and GrpE are required for fully efficient folding. Also involved, together with DnaK and GrpE, in the DNA replication of plasmids through activation of initiation proteins. This chain is Chaperone protein DnaJ, found in Mycoplasma capricolum subsp. capricolum (strain California kid / ATCC 27343 / NCTC 10154).